A 59-amino-acid chain; its full sequence is Small, acid-soluble spore protein H 1 (59 aa).

Belongs to the SspH family.

It localises to the spore core. The polypeptide is Small, acid-soluble spore protein H 1 (sspH1) (Bacillus cereus (strain ATCC 14579 / DSM 31 / CCUG 7414 / JCM 2152 / NBRC 15305 / NCIMB 9373 / NCTC 2599 / NRRL B-3711)).